Reading from the N-terminus, the 222-residue chain is Probable transaldolase (222 aa).

Lysine 91 acts as the Schiff-base intermediate with substrate in catalysis.

The protein belongs to the transaldolase family. Type 3B subfamily.

It is found in the cytoplasm. It carries out the reaction D-sedoheptulose 7-phosphate + D-glyceraldehyde 3-phosphate = D-erythrose 4-phosphate + beta-D-fructose 6-phosphate. Its pathway is carbohydrate degradation; pentose phosphate pathway; D-glyceraldehyde 3-phosphate and beta-D-fructose 6-phosphate from D-ribose 5-phosphate and D-xylulose 5-phosphate (non-oxidative stage): step 2/3. In terms of biological role, transaldolase is important for the balance of metabolites in the pentose-phosphate pathway. The protein is Probable transaldolase of Chlorobium luteolum (strain DSM 273 / BCRC 81028 / 2530) (Pelodictyon luteolum).